Here is a 109-residue protein sequence, read N- to C-terminus: Putative double-stranded DNA mimic protein YciU (109 aa).

It belongs to the putative dsDNA mimic protein family.

In terms of biological role, may act as a double-stranded DNA (dsDNA) mimic. Probably regulates the activity of a dsDNA-binding protein. This chain is Putative double-stranded DNA mimic protein YciU, found in Escherichia coli O45:K1 (strain S88 / ExPEC).